The sequence spans 205 residues: High frequency lysogenization protein HflD homolog (205 aa).

The protein belongs to the HflD family.

The protein localises to the cytoplasm. It localises to the cell inner membrane. In Shewanella baltica (strain OS223), this protein is High frequency lysogenization protein HflD homolog.